Consider the following 818-residue polypeptide: SIT4-associating protein SAP4 (818 aa).

2 disordered regions span residues 33-60 (ETSSTDDKKNEPSMESESEFGTESRDRS) and 499-526 (TSNTLEDKCNNNDSNDSNDNQKQKKNIK). Residues 509–518 (NNDSNDSNDN) show a composition bias toward low complexity.

It belongs to the SAPS family. Hyperphosphorylated in the absence of SIT4.

Its function is as follows. Associates with the SIT4 phosphatase in a cell cycle dependent manner. May be directly or indirectly involved in SIT4-dependent functions in budding and in normal G1 cyclin expression. This Saccharomyces cerevisiae (strain ATCC 204508 / S288c) (Baker's yeast) protein is SIT4-associating protein SAP4 (SAP4).